We begin with the raw amino-acid sequence, 162 residues long: NADPH-dependent 7-cyano-7-deazaguanine reductase (162 aa).

Catalysis depends on C53, which acts as the Thioimide intermediate. D60 acts as the Proton donor in catalysis. Substrate-binding positions include 75-77 and 94-95; these read VES and HE.

It belongs to the GTP cyclohydrolase I family. QueF type 1 subfamily.

It localises to the cytoplasm. The enzyme catalyses 7-aminomethyl-7-carbaguanine + 2 NADP(+) = 7-cyano-7-deazaguanine + 2 NADPH + 3 H(+). It participates in tRNA modification; tRNA-queuosine biosynthesis. Catalyzes the NADPH-dependent reduction of 7-cyano-7-deazaguanine (preQ0) to 7-aminomethyl-7-deazaguanine (preQ1). This is NADPH-dependent 7-cyano-7-deazaguanine reductase from Exiguobacterium sp. (strain ATCC BAA-1283 / AT1b).